A 406-amino-acid chain; its full sequence is Arginine deiminase (406 aa).

Cys-396 (amidino-cysteine intermediate) is an active-site residue.

The protein belongs to the arginine deiminase family.

It localises to the cytoplasm. The catalysed reaction is L-arginine + H2O = L-citrulline + NH4(+). The protein operates within amino-acid degradation; L-arginine degradation via ADI pathway; carbamoyl phosphate from L-arginine: step 1/2. In Aliivibrio fischeri (strain ATCC 700601 / ES114) (Vibrio fischeri), this protein is Arginine deiminase.